Here is a 160-residue protein sequence, read N- to C-terminus: Major pollen allergen Bet v 1-G (160 aa).

Brassinolide-binding residues include Lys-55, Tyr-82, Tyr-84, and Asn-101.

It belongs to the BetVI family.

It localises to the cytoplasm. May be a general steroid carrier protein. The polypeptide is Major pollen allergen Bet v 1-G (BETV1G) (Betula pendula (European white birch)).